The sequence spans 284 residues: L-ribulose-5-phosphate 3-epimerase UlaE (284 aa).

Belongs to the L-ribulose-5-phosphate 3-epimerase family.

The enzyme catalyses L-ribulose 5-phosphate = L-xylulose 5-phosphate. It functions in the pathway cofactor degradation; L-ascorbate degradation; D-xylulose 5-phosphate from L-ascorbate: step 3/4. Its function is as follows. Catalyzes the isomerization of L-xylulose-5-phosphate to L-ribulose-5-phosphate. Is involved in the anaerobic L-ascorbate utilization. The polypeptide is L-ribulose-5-phosphate 3-epimerase UlaE (Shigella sonnei (strain Ss046)).